The following is a 562-amino-acid chain: Arginine--tRNA ligase (562 aa).

Positions 121–131 match the 'HIGH' region motif; that stretch reads PNIAKPFSVGH.

This sequence belongs to the class-I aminoacyl-tRNA synthetase family. Monomer.

The protein resides in the cytoplasm. It catalyses the reaction tRNA(Arg) + L-arginine + ATP = L-arginyl-tRNA(Arg) + AMP + diphosphate. This chain is Arginine--tRNA ligase, found in Streptococcus suis (strain 98HAH33).